The primary structure comprises 255 residues: Propionicin-F (255 aa).

2 propeptides span residues 1–101 and 145–255; these read MNTK…RVSC and GTPT…DETV.

Its subcellular location is the secreted. In terms of biological role, bacteriocin with specific antibacterial activity against strains of P.freudenreichii. No antibacterial activity was detected against P.acidipropionici, P.jensenii and P.thoenii. The chain is Propionicin-F from Propionibacterium freudenreichii subsp. freudenreichii.